The primary structure comprises 636 residues: Threonine--tRNA ligase (636 aa).

The TGS domain occupies 1–63 (MINITTSFPN…SKDGSVDPVT (63 aa)). The segment at 244 to 535 (DHRKIAKDLG…LIEHYAGNIP (292 aa)) is catalytic. Residues C335, H386, and H512 each contribute to the Zn(2+) site.

The protein belongs to the class-II aminoacyl-tRNA synthetase family. Homodimer. It depends on Zn(2+) as a cofactor.

It localises to the cytoplasm. It carries out the reaction tRNA(Thr) + L-threonine + ATP = L-threonyl-tRNA(Thr) + AMP + diphosphate + H(+). Functionally, catalyzes the attachment of threonine to tRNA(Thr) in a two-step reaction: L-threonine is first activated by ATP to form Thr-AMP and then transferred to the acceptor end of tRNA(Thr). Also edits incorrectly charged L-seryl-tRNA(Thr). The sequence is that of Threonine--tRNA ligase from Anaplasma marginale (strain St. Maries).